Consider the following 130-residue polypeptide: Small ribosomal subunit protein uS9 (130 aa).

This sequence belongs to the universal ribosomal protein uS9 family.

The sequence is that of Small ribosomal subunit protein uS9 from Anaeromyxobacter dehalogenans (strain 2CP-1 / ATCC BAA-258).